The sequence spans 476 residues: Glycogen synthase (476 aa).

An ADP-alpha-D-glucose-binding site is contributed by Lys-15.

This sequence belongs to the glycosyltransferase 1 family. Bacterial/plant glycogen synthase subfamily.

The enzyme catalyses [(1-&gt;4)-alpha-D-glucosyl](n) + ADP-alpha-D-glucose = [(1-&gt;4)-alpha-D-glucosyl](n+1) + ADP + H(+). It participates in glycan biosynthesis; glycogen biosynthesis. Its function is as follows. Synthesizes alpha-1,4-glucan chains using ADP-glucose. The sequence is that of Glycogen synthase from Bacillus cereus (strain Q1).